The chain runs to 120 residues: Flagellar protein FliT (120 aa).

A required for homodimerization region spans residues 1-50 (MENLSPLLIEYQGLLKLIRNIKAMALNGLWDDVVEQEIVYIQSIERISQI). The segment at 60–98 (VQLQFRQLLQDILDTESQVKELLQNRMQELAVLIQQSQN) is fliD binding.

This sequence belongs to the FliT family. Homodimer. Interacts with FliD and FlhC.

It is found in the cytoplasm. The protein resides in the cytosol. In terms of biological role, dual-function protein that regulates the transcription of class 2 flagellar operons and that also acts as an export chaperone for the filament-capping protein FliD. As a transcriptional regulator, acts as an anti-FlhDC factor; it directly binds FlhC, thus inhibiting the binding of the FlhC/FlhD complex to class 2 promoters, resulting in decreased expression of class 2 flagellar operons. As a chaperone, effects FliD transition to the membrane by preventing its premature polymerization, and by directing it to the export apparatus. The protein is Flagellar protein FliT of Dickeya chrysanthemi (Pectobacterium chrysanthemi).